Reading from the N-terminus, the 307-residue chain is Universal stress protein A family protein C25B2.10 (307 aa).

The disordered stretch occupies residues 1–63 (MSESAPAGSK…RSSMEQPTFR (63 aa)). Residues 21–30 (PEPRTSKDQQ) show a composition bias toward basic and acidic residues. S44 bears the Phosphoserine mark. A Phosphothreonine modification is found at T48. Phosphoserine is present on residues S98 and S102.

Belongs to the universal stress protein A family.

Its subcellular location is the barrier septum. It is found in the cell tip. The chain is Universal stress protein A family protein C25B2.10 from Schizosaccharomyces pombe (strain 972 / ATCC 24843) (Fission yeast).